A 200-amino-acid chain; its full sequence is MKILITGFDPFGGEKINPAIEAVKKLPDEIDGHQIIKLEVPTIFYESARVVKNAIEKYQPDMVINVGQAGGRAAITPERIAINFQSGSTPDNSGKGPKEGKIEADGADGYFTQLPIKKMVTATRKAGVPSEISNSAGNYVCNHLFYELQYMRVHEFPNLKTGFIHIPFLPSQVKNGRHPSMSLSYMVKGLTASIKAAVDA.

Catalysis depends on residues glutamate 78, cysteine 141, and histidine 165.

It belongs to the peptidase C15 family. As to quaternary structure, homotetramer.

The protein resides in the cytoplasm. It carries out the reaction Release of an N-terminal pyroglutamyl group from a polypeptide, the second amino acid generally not being Pro.. Its function is as follows. Removes 5-oxoproline from various penultimate amino acid residues except L-proline. This chain is Pyrrolidone-carboxylate peptidase, found in Lactobacillus acidophilus (strain ATCC 700396 / NCK56 / N2 / NCFM).